The chain runs to 297 residues: Probable endonuclease 4 (297 aa).

His-69, His-110, Glu-145, Asp-179, His-182, His-214, Asp-227, His-229, and Glu-259 together coordinate Zn(2+).

It belongs to the AP endonuclease 2 family. The cofactor is Zn(2+).

The catalysed reaction is Endonucleolytic cleavage to 5'-phosphooligonucleotide end-products.. Its function is as follows. Endonuclease IV plays a role in DNA repair. It cleaves phosphodiester bonds at apurinic or apyrimidinic (AP) sites, generating a 3'-hydroxyl group and a 5'-terminal sugar phosphate. The chain is Probable endonuclease 4 from Listeria innocua serovar 6a (strain ATCC BAA-680 / CLIP 11262).